The sequence spans 131 residues: Transcriptional activator protein (131 aa).

Residues 13-28 (KAQHRIAKKRAVRRRR) carry the Nuclear localization signal motif. A zinc finger lies at 33-52 (CGCSIYIHINCAKDGNGFTH). The interval 78 to 131 (DVQXGGSTLHAHKDIPHTNPVQPQPEESTKSSQSVPELPSLDGIDSSFWDDIFE) is disordered. Residues 117 to 131 (SLDGIDSSFWDDIFE) are transactivation.

The protein belongs to the geminiviridae transcriptional activator protein family. In terms of assembly, monomer. Homodimer. Homooligomer. Self-interaction correlates with nuclear localization and efficient activation of transcription. Monomers suppress local silencing by interacting with and inactivating host adenosine kinase 2 (ADK2) in the cytoplasm. Interacts with and inhibits host SNF1 kinase. Binds to ssDNA. In terms of processing, phosphorylated.

It localises to the host nucleus. The protein localises to the host cytoplasm. Strong activator of the late viral genes promoters. Enhances the expression of the capsid protein and nuclear shuttle protein. Acts as a suppressor of RNA-mediated gene silencing, also known as post-transcriptional gene silencing (PTGS), a mechanism of plant viral defense that limits the accumulation of viral RNAs. Suppresses the host RNA silencing by inhibiting adenosine kinase 2 (ADK2), a kinase involved in a general methylation pathway. Also suppresses the host basal defense by interacting with and inhibiting SNF1 kinase, a key regulator of cell metabolism implicated in innate antiviral defense. Determines pathogenicity. The sequence is that of Transcriptional activator protein from Cucurbita moschata (Winter crookneck squash).